The following is a 434-amino-acid chain: MLDIQLFRKDIDAVAQRLATRGYQLDVAAFQALEAERKQLQTQTEELQARRNSLSKQIGMLKGKGEDASAVMAEVGGIGDTLKASAARLDEIQAHLAELMLAIPNLPHESVPVGNDETQNVEVRRVGEPRQFDFAVRDHVDVGDKLGLDFDTAVKVTGSRFSMLRGGLARMNRALVQLMLDTHTQEHGYTEMYVPYMVNAASMRGTGQLPKFEEDLFKVPRKVGSEDGERIENFYLIPTAEVPLTNIVRDAIVAGEKLPLRFVAHTPCFRSEAGSYGKDTRGMIRQHQFDKVELVQVVPAAQSFEALEQLTGHAEAILKKLELPFRTIVLCTGDMGFGSTKTYDLEVWIPAQNTYREISSCSNMGDFQARRMQARMRAGQGKPELVHTLNGSGLAVGRTLVAILENYQNADGSVTVPAALQPYMGGITRLEPEM.

Position 239–241 (239–241 (TAE)) interacts with L-serine. An ATP-binding site is contributed by 270–272 (RSE). Glu293 contacts L-serine. Residue 357 to 360 (EISS) participates in ATP binding. An L-serine-binding site is contributed by Ser392.

Belongs to the class-II aminoacyl-tRNA synthetase family. Type-1 seryl-tRNA synthetase subfamily. As to quaternary structure, homodimer. The tRNA molecule binds across the dimer.

It localises to the cytoplasm. It catalyses the reaction tRNA(Ser) + L-serine + ATP = L-seryl-tRNA(Ser) + AMP + diphosphate + H(+). The catalysed reaction is tRNA(Sec) + L-serine + ATP = L-seryl-tRNA(Sec) + AMP + diphosphate + H(+). Its pathway is aminoacyl-tRNA biosynthesis; selenocysteinyl-tRNA(Sec) biosynthesis; L-seryl-tRNA(Sec) from L-serine and tRNA(Sec): step 1/1. Functionally, catalyzes the attachment of serine to tRNA(Ser). Is also able to aminoacylate tRNA(Sec) with serine, to form the misacylated tRNA L-seryl-tRNA(Sec), which will be further converted into selenocysteinyl-tRNA(Sec). In Cupriavidus necator (strain ATCC 17699 / DSM 428 / KCTC 22496 / NCIMB 10442 / H16 / Stanier 337) (Ralstonia eutropha), this protein is Serine--tRNA ligase.